The primary structure comprises 256 residues: 5-oxoprolinase subunit A (256 aa).

The protein belongs to the LamB/PxpA family. Forms a complex composed of PxpA, PxpB and PxpC.

It carries out the reaction 5-oxo-L-proline + ATP + 2 H2O = L-glutamate + ADP + phosphate + H(+). In terms of biological role, catalyzes the cleavage of 5-oxoproline to form L-glutamate coupled to the hydrolysis of ATP to ADP and inorganic phosphate. This Cutibacterium acnes (strain DSM 16379 / KPA171202) (Propionibacterium acnes) protein is 5-oxoprolinase subunit A.